The sequence spans 209 residues: Auxin-binding protein ABP19b (209 aa).

A signal peptide spans 1–18; that stretch reads MIFPIFFTFFLLLSTSHA. Cysteines 24 and 39 form a disulfide. The Cupin type-1 domain maps to 53-199; it reads SGLGIAGNTT…TTLLDAPQIK (147 aa). An N-linked (GlcNAc...) asparagine glycan is attached at Asn60. Positions 101, 103, 108, and 147 each coordinate Mn(2+).

It belongs to the germin family. As to quaternary structure, interacts with ABP20.

Its subcellular location is the secreted. It is found in the extracellular space. It localises to the apoplast. The protein localises to the cell wall. Its function is as follows. Probable receptor for the plant growth-promoting hormone auxin. In Prunus persica (Peach), this protein is Auxin-binding protein ABP19b (ABP19B).